A 265-amino-acid chain; its full sequence is MTLRLSGIELRHSDGTLALRGLDLNIAGGERVAIIGPSGAGKTTLLNLLASALPPSAGQLEVLGADPWQLSSKRRQRLRSRIALVHQAPPLPARQRVITAVSAGKLGQWGLGKSLLNLLHPLDVSGTREVLARLDLADKLFERCQQLSGGQLQRVGIARALYQAPELLLADEPVSAMDPRLADHTLALLCQHAIEHHVTLVASLHAVELALAHFPRIIGVRDGQIHFDLAANEVDRQHLDTLYANEQLSPQPAPDVSETPWTPRC.

An ABC transporter domain is found at 3-247 (LRLSGIELRH…HLDTLYANEQ (245 aa)). 36 to 43 (GPSGAGKT) contacts ATP. The disordered stretch occupies residues 245-265 (NEQLSPQPAPDVSETPWTPRC).

It belongs to the ABC transporter superfamily. Phosphonates importer (TC 3.A.1.9.1) family. In terms of assembly, the complex is composed of two ATP-binding proteins (PhnC), two transmembrane proteins (PhnE) and a solute-binding protein (PhnD).

The protein localises to the cell inner membrane. The catalysed reaction is phosphonate(out) + ATP + H2O = phosphonate(in) + ADP + phosphate + H(+). Its function is as follows. Part of the ABC transporter complex PhnCDE involved in phosphonates import. Responsible for energy coupling to the transport system. The protein is Phosphonates import ATP-binding protein PhnC 1 of Pseudomonas savastanoi pv. phaseolicola (strain 1448A / Race 6) (Pseudomonas syringae pv. phaseolicola (strain 1448A / Race 6)).